The sequence spans 878 residues: Phosphoenolpyruvate carboxylase (878 aa).

Residues His-140 and Lys-545 contribute to the active site.

This sequence belongs to the PEPCase type 1 family. It depends on Mg(2+) as a cofactor.

The enzyme catalyses oxaloacetate + phosphate = phosphoenolpyruvate + hydrogencarbonate. In terms of biological role, forms oxaloacetate, a four-carbon dicarboxylic acid source for the tricarboxylic acid cycle. The sequence is that of Phosphoenolpyruvate carboxylase from Pseudomonas paraeruginosa (strain DSM 24068 / PA7) (Pseudomonas aeruginosa (strain PA7)).